The following is a 311-amino-acid chain: Phosphoribosylamine--glycine ligase (311 aa).

In terms of domain architecture, ATP-grasp spans 1–191; that stretch reads DPRVRKQYIQ…LVQVLLAACR (191 aa).

This sequence belongs to the GARS family.

The protein resides in the plastid. The protein localises to the chloroplast. It carries out the reaction 5-phospho-beta-D-ribosylamine + glycine + ATP = N(1)-(5-phospho-beta-D-ribosyl)glycinamide + ADP + phosphate + H(+). It participates in purine metabolism; IMP biosynthesis via de novo pathway; N(1)-(5-phospho-D-ribosyl)glycinamide from 5-phospho-alpha-D-ribose 1-diphosphate: step 2/2. The protein is Phosphoribosylamine--glycine ligase (PUR2) of Vigna unguiculata (Cowpea).